The sequence spans 183 residues: Adenylate kinase (183 aa).

7-15 (GVAGVGKTT) serves as a coordination point for ATP.

It belongs to the archaeal adenylate kinase family.

It localises to the cytoplasm. It carries out the reaction AMP + ATP = 2 ADP. In Thermoplasma acidophilum (strain ATCC 25905 / DSM 1728 / JCM 9062 / NBRC 15155 / AMRC-C165), this protein is Adenylate kinase (adkA).